The sequence spans 705 residues: Elongation factor G (705 aa).

Residues 8 to 294 (ELCRNFGIMA…SVIDYLPSPL (287 aa)) form the tr-type G domain. Residues 17-24 (AHIDAGKT), 92-96 (DTPGH), and 146-149 (NKMD) contribute to the GTP site.

Belongs to the TRAFAC class translation factor GTPase superfamily. Classic translation factor GTPase family. EF-G/EF-2 subfamily.

The protein resides in the cytoplasm. Functionally, catalyzes the GTP-dependent ribosomal translocation step during translation elongation. During this step, the ribosome changes from the pre-translocational (PRE) to the post-translocational (POST) state as the newly formed A-site-bound peptidyl-tRNA and P-site-bound deacylated tRNA move to the P and E sites, respectively. Catalyzes the coordinated movement of the two tRNA molecules, the mRNA and conformational changes in the ribosome. The sequence is that of Elongation factor G from Cereibacter sphaeroides (strain ATCC 17023 / DSM 158 / JCM 6121 / CCUG 31486 / LMG 2827 / NBRC 12203 / NCIMB 8253 / ATH 2.4.1.) (Rhodobacter sphaeroides).